Reading from the N-terminus, the 443-residue chain is tRNA-2-methylthio-N(6)-dimethylallyladenosine synthase (443 aa).

The region spanning 3-120 (SKLYIRTFGC…LPDLIDARRR (118 aa)) is the MTTase N-terminal domain. [4Fe-4S] cluster-binding residues include Cys-12, Cys-49, Cys-83, Cys-157, Cys-161, and Cys-164. Residues 143-375 (RTEGSTAFVS…QEKIQLNAQA (233 aa)) form the Radical SAM core domain. Residues 378-441 (QGMVDTVQRI…SHTLRGEISD (64 aa)) enclose the TRAM domain.

The protein belongs to the methylthiotransferase family. MiaB subfamily. In terms of assembly, monomer. [4Fe-4S] cluster is required as a cofactor.

The protein localises to the cytoplasm. The catalysed reaction is N(6)-dimethylallyladenosine(37) in tRNA + (sulfur carrier)-SH + AH2 + 2 S-adenosyl-L-methionine = 2-methylsulfanyl-N(6)-dimethylallyladenosine(37) in tRNA + (sulfur carrier)-H + 5'-deoxyadenosine + L-methionine + A + S-adenosyl-L-homocysteine + 2 H(+). Catalyzes the methylthiolation of N6-(dimethylallyl)adenosine (i(6)A), leading to the formation of 2-methylthio-N6-(dimethylallyl)adenosine (ms(2)i(6)A) at position 37 in tRNAs that read codons beginning with uridine. The sequence is that of tRNA-2-methylthio-N(6)-dimethylallyladenosine synthase from Nitrosomonas europaea (strain ATCC 19718 / CIP 103999 / KCTC 2705 / NBRC 14298).